The primary structure comprises 62 residues: Photosystem II reaction center protein Z (62 aa).

The next 2 membrane-spanning stretches (helical) occupy residues 8 to 28 (TVLALIATSFLMVIGVPVIFA) and 41 to 61 (FSGALLWISLVFAVGILNSFV).

The protein belongs to the PsbZ family. As to quaternary structure, PSII is composed of 1 copy each of membrane proteins PsbA, PsbB, PsbC, PsbD, PsbE, PsbF, PsbH, PsbI, PsbJ, PsbK, PsbL, PsbM, PsbT, PsbY, PsbZ, Psb30/Ycf12, at least 3 peripheral proteins of the oxygen-evolving complex and a large number of cofactors. It forms dimeric complexes.

It localises to the plastid. The protein resides in the chloroplast thylakoid membrane. Functionally, may control the interaction of photosystem II (PSII) cores with the light-harvesting antenna, regulates electron flow through the 2 photosystem reaction centers. PSII is a light-driven water plastoquinone oxidoreductase, using light energy to abstract electrons from H(2)O, generating a proton gradient subsequently used for ATP formation. This Mesostigma viride (Green alga) protein is Photosystem II reaction center protein Z.